A 525-amino-acid polypeptide reads, in one-letter code: Ribosomal protein uS12 methylthiotransferase RimO (525 aa).

Residues 1-20 (MPKISTESVNTTIAPSQPAS) are compositionally biased toward polar residues. Positions 1 to 44 (MPKISTESVNTTIAPSQPASTAPKDTATLFNPAKPTATPAQSSI) are disordered. Positions 82 to 192 (PKIGFVSLGC…VIRAVALHVP (111 aa)) constitute an MTTase N-terminal domain. [4Fe-4S] cluster contacts are provided by cysteine 91, cysteine 127, cysteine 156, cysteine 230, cysteine 234, and cysteine 237. In terms of domain architecture, Radical SAM core spans 216–453 (LTPSHYAYLK…MTLQQDISAQ (238 aa)). The TRAM domain maps to 456 to 525 (QEKIGKTLMV…EYDLFASYQA (70 aa)).

This sequence belongs to the methylthiotransferase family. RimO subfamily. It depends on [4Fe-4S] cluster as a cofactor.

It localises to the cytoplasm. The catalysed reaction is L-aspartate(89)-[ribosomal protein uS12]-hydrogen + (sulfur carrier)-SH + AH2 + 2 S-adenosyl-L-methionine = 3-methylsulfanyl-L-aspartate(89)-[ribosomal protein uS12]-hydrogen + (sulfur carrier)-H + 5'-deoxyadenosine + L-methionine + A + S-adenosyl-L-homocysteine + 2 H(+). Its function is as follows. Catalyzes the methylthiolation of an aspartic acid residue of ribosomal protein uS12. This chain is Ribosomal protein uS12 methylthiotransferase RimO, found in Psychrobacter arcticus (strain DSM 17307 / VKM B-2377 / 273-4).